The following is a 116-amino-acid chain: Large ribosomal subunit protein bL19 (116 aa).

The protein belongs to the bacterial ribosomal protein bL19 family.

In terms of biological role, this protein is located at the 30S-50S ribosomal subunit interface and may play a role in the structure and function of the aminoacyl-tRNA binding site. This chain is Large ribosomal subunit protein bL19, found in Staphylococcus epidermidis (strain ATCC 35984 / DSM 28319 / BCRC 17069 / CCUG 31568 / BM 3577 / RP62A).